Consider the following 274-residue polypeptide: 3-methyl-2-oxobutanoate hydroxymethyltransferase (274 aa).

Mg(2+)-binding residues include Asp-44 and Asp-83. 3-methyl-2-oxobutanoate-binding positions include 44–45 (DS), Asp-83, and Lys-113. Glu-115 is a Mg(2+) binding site. The Proton acceptor role is filled by Glu-182.

This sequence belongs to the PanB family. As to quaternary structure, homodecamer; pentamer of dimers. Requires Mg(2+) as cofactor.

The protein resides in the cytoplasm. It catalyses the reaction 3-methyl-2-oxobutanoate + (6R)-5,10-methylene-5,6,7,8-tetrahydrofolate + H2O = 2-dehydropantoate + (6S)-5,6,7,8-tetrahydrofolate. The protein operates within cofactor biosynthesis; (R)-pantothenate biosynthesis; (R)-pantoate from 3-methyl-2-oxobutanoate: step 1/2. Functionally, catalyzes the reversible reaction in which hydroxymethyl group from 5,10-methylenetetrahydrofolate is transferred onto alpha-ketoisovalerate to form ketopantoate. This chain is 3-methyl-2-oxobutanoate hydroxymethyltransferase, found in Campylobacter jejuni subsp. doylei (strain ATCC BAA-1458 / RM4099 / 269.97).